The chain runs to 2319 residues: A-kinase anchor protein 6 (2319 aa).

2 stretches are compositionally biased toward polar residues: residues 1 to 12 (MLTMSVTLSPLR) and 324 to 339 (GVSS…AAQP). Disordered regions lie at residues 1 to 24 (MLTM…TDAS), 301 to 369 (VDDK…NATP), 493 to 532 (SRLK…VPNG), 566 to 614 (LQLQ…PSHV), and 691 to 757 (TRLG…SATK). The span at 340 to 351 (SSETVQQESSSS) shows a compositional bias: low complexity. Composition is skewed to polar residues over residues 518–532 (GKQA…VPNG) and 566–591 (LQLQ…SDNI). Positions 697 to 711 (SPSSSSDIASSLGES) are enriched in low complexity. The segment covering 735 to 754 (KYADEKSERASSSEKNESHS) has biased composition (basic and acidic residues). Spectrin repeat units follow at residues 762 to 848 (QKLM…QLLE) and 1036 to 1150 (EKVD…LLDD). Serine 1073 carries the phosphoserine modification. Residues 1250–1272 (KLGETSNEDPGYDEEADNHGGSQ) are disordered. The segment covering 1255–1265 (SNEDPGYDEEA) has biased composition (acidic residues). A phosphoserine mark is found at serine 1570 and serine 1595. Disordered stretches follow at residues 1821–1842 (VSDE…PSDT), 1900–1925 (EGIP…SHGK), and 1963–1983 (KCPN…TEKS). 3 stretches are compositionally biased toward polar residues: residues 1830–1842 (DISS…PSDT), 1911–1920 (NVTSKVSENL), and 1972–1982 (NQSTASTPTEK). The tract at residues 2063 to 2076 (IIDMASTALKSKSQ) is PKA-RII subunit binding domain. Low complexity predominate over residues 2198 to 2215 (FSDSSLSADDADTVALSS). Residues 2198 to 2319 (FSDSSLSADD…HEKRHRNMHR (122 aa)) are disordered.

In terms of assembly, interacts with RII subunit of PKA, phosphatase 2B (calcineurin) and AKAP79. Interacts with SYNPO2. As to expression, highly expressed in cardiac and skeletal muscle, followed by brain.

The protein resides in the sarcoplasmic reticulum. It localises to the nucleus membrane. Binds to type II regulatory subunits of protein kinase A and anchors/targets them to the nuclear membrane or sarcoplasmic reticulum. May act as an adapter for assembling multiprotein complexes. The polypeptide is A-kinase anchor protein 6 (AKAP6) (Homo sapiens (Human)).